A 449-amino-acid chain; its full sequence is Probable rhamnogalacturonase E (449 aa).

Positions 1-21 are cleaved as a signal peptide; it reads MRSKTFSVLSSCLLLIATVQG. The cysteines at positions 42 and 68 are disulfide-linked. Residues asparagine 53, asparagine 91, and asparagine 106 are each glycosylated (N-linked (GlcNAc...) asparagine). The active-site Proton donor is aspartate 221. An intrachain disulfide couples cysteine 223 to cysteine 240. N-linked (GlcNAc...) asparagine glycans are attached at residues asparagine 241 and asparagine 256. The active site involves histidine 296. N-linked (GlcNAc...) asparagine glycosylation is present at asparagine 323. Disulfide bonds link cysteine 346–cysteine 352 and cysteine 374–cysteine 383.

This sequence belongs to the glycosyl hydrolase 28 family.

Its subcellular location is the secreted. The enzyme catalyses Endohydrolysis of alpha-D-GalA-(1-&gt;2)-alpha-L-Rha glycosidic bond in the rhamnogalacturonan I backbone with initial inversion of anomeric configuration releasing oligosaccharides with beta-D-GalA at the reducing end.. Functionally, pectinolytic enzymes consist of four classes of enzymes: pectine lyase, polygalacturonase, pectin methylesterase and rhamnogalacturonase. Hydrolyzes alpha-D-galacturonopyranosyl-(1,2)-alpha-L-rhamnopyranosyl linkages in the backbone of the hairy regions of pectins. This chain is Probable rhamnogalacturonase E (rhgE), found in Aspergillus flavus (strain ATCC 200026 / FGSC A1120 / IAM 13836 / NRRL 3357 / JCM 12722 / SRRC 167).